The following is a 1091-amino-acid chain: ATP-dependent helicase/deoxyribonuclease subunit B (1091 aa).

Belongs to the helicase family. AddB/RexB type 2 subfamily. As to quaternary structure, heterodimer of AddA and RexB. Mg(2+) is required as a cofactor.

Functionally, the heterodimer acts as both an ATP-dependent DNA helicase and an ATP-dependent, dual-direction single-stranded exonuclease. Recognizes the chi site generating a DNA molecule suitable for the initiation of homologous recombination. This subunit has 5' -&gt; 3' nuclease activity but not helicase activity. The protein is ATP-dependent helicase/deoxyribonuclease subunit B of Streptococcus pneumoniae (strain Hungary19A-6).